A 492-amino-acid chain; its full sequence is Glutamyl-tRNA(Gln) amidotransferase subunit A (492 aa).

Active-site charge relay system residues include Lys-77 and Ser-152. The active-site Acyl-ester intermediate is the Ser-176.

The protein belongs to the amidase family. GatA subfamily. Heterotrimer of A, B and C subunits.

The enzyme catalyses L-glutamyl-tRNA(Gln) + L-glutamine + ATP + H2O = L-glutaminyl-tRNA(Gln) + L-glutamate + ADP + phosphate + H(+). Allows the formation of correctly charged Gln-tRNA(Gln) through the transamidation of misacylated Glu-tRNA(Gln) in organisms which lack glutaminyl-tRNA synthetase. The reaction takes place in the presence of glutamine and ATP through an activated gamma-phospho-Glu-tRNA(Gln). This is Glutamyl-tRNA(Gln) amidotransferase subunit A (gatA) from Chlamydia pneumoniae (Chlamydophila pneumoniae).